An 83-amino-acid polypeptide reads, in one-letter code: Neurotoxin 3FTx-RI (83 aa).

Residues 1-21 (MKTLLLTLVVLTIVCLDLGHT) form the signal peptide. 4 cysteine pairs are disulfide-bonded: C24-C45, C38-C62, C64-C75, and C76-C81.

The protein belongs to the three-finger toxin family. Short-chain subfamily. Type I alpha-neurotoxin sub-subfamily. Expressed by the venom gland.

The protein resides in the secreted. In terms of biological role, binds to muscle nicotinic acetylcholine receptor (nAChR) and inhibit acetylcholine from binding to the receptor, thereby impairing neuromuscular transmission. This chain is Neurotoxin 3FTx-RI, found in Bungarus fasciatus (Banded krait).